The primary structure comprises 140 residues: Large ribosomal subunit protein uL22c (140 aa).

Belongs to the universal ribosomal protein uL22 family. Part of the 50S ribosomal subunit.

The protein resides in the plastid. The protein localises to the chloroplast. In terms of biological role, this protein binds specifically to 23S rRNA. Functionally, the globular domain of the protein is located near the polypeptide exit tunnel on the outside of the subunit, while an extended beta-hairpin is found that lines the wall of the exit tunnel in the center of the 70S ribosome. In Calycanthus floridus var. glaucus (Eastern sweetshrub), this protein is Large ribosomal subunit protein uL22c (rpl22).